Reading from the N-terminus, the 477-residue chain is MTSLTQVKQYGLYVNGEWETTAEKMEVLNKYTQQPAAEISVATKDDVNKAVASAKDALKNTFSPYERYEVLMKAADLLLSRQEEFAEILATEVGKSIRESRGEVERAATTLQISAEEAKRIHGEGVPVESAPGSENRMAFTVKVPVGVVAAITPFNVPINLVCHKLGPALAAGNSVVLKPAEVTPICALKLAELMEEAGLPKGRLQVLTGDGAEIGEWLLENQDVNMFTFTGSPRVGELIRSKAGLRKVSLELGNNSATIVHKDADLEKAASLISQKSFNNAGQVCISVQRIYVHTNIYTAFVNKLKEKTEKLVVGNPMDEQTDIGPMIRLKEAERVEEWVKEAVEEGAKIELGGKRDGAFYLPTILTNVNDDMKVCRQEVFGPAVAIAQYDEIDEVISKVNDSDYGLQAGLFTNDLQFAMKAAREIEVGGLIVNDASAYRVDHMPYGGVKKSGNGKEGPKYAIEEMTEERIIVLNL.

232–233 (GS) is a binding site for NAD(+). E252 serves as the catalytic Proton acceptor. L253 serves as a coordination point for NAD(+). C286 acts as the Nucleophile in catalysis. E380 is an NAD(+) binding site.

The protein belongs to the aldehyde dehydrogenase family.

It carries out the reaction (2S)-3-sulfolactaldehyde + NAD(+) + H2O = (2S)-3-sulfolactate + NADH + 2 H(+). In terms of biological role, part of the sulfo-TAL (or sulfo-SFT) pathway, a D-sulfoquinovose degradation pathway that produces sulfolactate (SL). Catalyzes the oxidation of 3-sulfolactaldehyde (SLA) to sulfolactate (SL). In Priestia aryabhattai (Bacillus aryabhattai), this protein is 3-sulfolactaldehyde dehydrogenase.